A 208-amino-acid chain; its full sequence is 3-demethoxyubiquinol 3-hydroxylase (208 aa).

Fe cation-binding residues include Glu57, Glu87, His90, Glu139, Glu171, and His174.

This sequence belongs to the COQ7 family. Requires Fe cation as cofactor.

Its subcellular location is the cell membrane. It catalyses the reaction a 5-methoxy-2-methyl-3-(all-trans-polyprenyl)benzene-1,4-diol + AH2 + O2 = a 3-demethylubiquinol + A + H2O. Its pathway is cofactor biosynthesis; ubiquinone biosynthesis. Its function is as follows. Catalyzes the hydroxylation of 2-nonaprenyl-3-methyl-6-methoxy-1,4-benzoquinol during ubiquinone biosynthesis. In Herbaspirillum seropedicae, this protein is 3-demethoxyubiquinol 3-hydroxylase.